Reading from the N-terminus, the 222-residue chain is Histone H1.5 (222 aa).

Low complexity predominate over residues 1–16 (MSETAPAETTAPAPVE). The tract at residues 1–55 (MSETAPAETTAPAPVEKSPAKKKTKKAGAAKRKATGPPVSELITKAVSASKERGG) is disordered. The residue at position 2 (Ser2) is an N-acetylserine. Position 2 is a phosphoserine (Ser2). At Lys17 the chain carries N6-acetyllysine. A Phosphoserine modification is found at Ser18. A compositionally biased stretch (basic residues) spans 20–34 (AKKKTKKAGAAKRKA). Residue Lys26 is modified to N6-methyllysine. Lys33 carries the post-translational modification N6-(beta-hydroxybutyryl)lysine; alternate. Lys33 is subject to N6-succinyllysine; alternate. Thr35 carries the phosphothreonine modification. One can recognise an H15 domain in the interval 35–108 (TGPPVSELIT…GASGSFKLNK (74 aa)). Position 45 is an N6-acetyllysine (Lys45). Lys51 carries the post-translational modification N6-(beta-hydroxybutyryl)lysine. Residue Arg53 is modified to Citrulline. Position 63 is an N6-(beta-hydroxybutyryl)lysine (Lys63). Lys74 bears the N6-acetyllysine mark. Residues Lys84, Lys89, and Lys105 each carry the N6-(beta-hydroxybutyryl)lysine modification. Positions 94–222 (QTKGTGASGS…KVKKAVSKKK (129 aa)) are disordered. Basic residues predominate over residues 118-129 (KAKKTGAAKAKK). A phosphothreonine mark is found at Thr134 and Thr151. Basic residues predominate over residues 136-157 (KKPKKTAGAKKTVKKTPKKAKK). The residue at position 164 (Lys164) is an N6-acetyllysine. A compositionally biased stretch (basic residues) spans 165 to 183 (KVTKSPKKAKAAAKPKKAT). 2 positions are modified to phosphoserine: Ser169 and Ser185. The span at 190–222 (KAVKSKASKPKVTKPKAAKPKAAKVKKAVSKKK) shows a compositional bias: basic residues.

The protein belongs to the histone H1/H5 family. As to quaternary structure, interacts with MSX1. H1 histones are progressively phosphorylated during the cell cycle, becoming maximally phosphorylated during late G2 phase and M phase, and being dephosphorylated sharply thereafter. In terms of processing, citrullination at Arg-53 (H1R54ci) by PADI4 takes place within the DNA-binding site of H1 and results in its displacement from chromatin and global chromatin decondensation, thereby promoting pluripotency and stem cell maintenance.

It localises to the nucleus. Its subcellular location is the chromosome. Functionally, histone H1 protein binds to linker DNA between nucleosomes forming the macromolecular structure known as the chromatin fiber. Histones H1 are necessary for the condensation of nucleosome chains into higher-order structured fibers. Also acts as a regulator of individual gene transcription through chromatin remodeling, nucleosome spacing and DNA methylation. The polypeptide is Histone H1.5 (H1-5) (Rattus norvegicus (Rat)).